The following is a 199-amino-acid chain: 3-isopropylmalate dehydratase small subunit (199 aa).

The protein belongs to the LeuD family. LeuD type 1 subfamily. In terms of assembly, heterodimer of LeuC and LeuD.

It catalyses the reaction (2R,3S)-3-isopropylmalate = (2S)-2-isopropylmalate. It functions in the pathway amino-acid biosynthesis; L-leucine biosynthesis; L-leucine from 3-methyl-2-oxobutanoate: step 2/4. Functionally, catalyzes the isomerization between 2-isopropylmalate and 3-isopropylmalate, via the formation of 2-isopropylmaleate. This Kocuria rhizophila (strain ATCC 9341 / DSM 348 / NBRC 103217 / DC2201) protein is 3-isopropylmalate dehydratase small subunit.